Here is a 544-residue protein sequence, read N- to C-terminus: Chaperonin GroEL 1 (544 aa).

ATP-binding positions include threonine 30–proline 33, lysine 51, aspartate 87–threonine 91, glycine 415, aspartate 481–leucine 483, and aspartate 497.

Belongs to the chaperonin (HSP60) family. In terms of assembly, forms a cylinder of 14 subunits composed of two heptameric rings stacked back-to-back. Interacts with the co-chaperonin GroES.

The protein localises to the cytoplasm. It carries out the reaction ATP + H2O + a folded polypeptide = ADP + phosphate + an unfolded polypeptide.. Its function is as follows. Together with its co-chaperonin GroES, plays an essential role in assisting protein folding. The GroEL-GroES system forms a nano-cage that allows encapsulation of the non-native substrate proteins and provides a physical environment optimized to promote and accelerate protein folding. The sequence is that of Chaperonin GroEL 1 from Chlamydia caviae (strain ATCC VR-813 / DSM 19441 / 03DC25 / GPIC) (Chlamydophila caviae).